The following is a 182-amino-acid chain: ADP-ribosylation factor 1 (182 aa).

A lipid anchor (N-myristoyl glycine) is attached at Gly-2. Positions 3–16 (NVFANLFKGLFGKK) are important for the stable binding to the membranes. GTP-binding positions include 24-32 (GLDAAGKTT), 126-129 (NKQD), and Ala-160.

Belongs to the small GTPase superfamily. Arf family.

It localises to the golgi apparatus membrane. The protein localises to the cytoplasm. The protein resides in the cytosol. It carries out the reaction GTP + H2O = GDP + phosphate + H(+). With respect to regulation, alternates between an inactive GDP-bound form and an active GTP-bound form. Activated by a guanine nucleotide-exchange factor (GEF) and inactivated by GTPase-activating protein (GAP). Small GTPase involved in protein trafficking between different compartments. Modulates vesicle budding and uncoating within the Golgi complex. In its GTP-bound form, triggers the recruitment of coatomer proteins to the Golgi membrane. The hydrolysis of ARF1-bound GTP, which is mediated by ARFGAPs proteins, is required for dissociation of coat proteins from Golgi membranes and vesicles. Has a role in eye development. Required for cleavage furrow ingression in embryonic cells. The sequence is that of ADP-ribosylation factor 1 from Drosophila melanogaster (Fruit fly).